The primary structure comprises 81 residues: MNKKLSIIFLIFALIASVLCSAEDPHLFHSSSTTTTTSSSGGTSGTDSSINTGSSYSGSGSGSGSTGGSGSGSGSGTAKWK.

The first 22 residues, 1 to 22, serve as a signal peptide directing secretion; it reads MNKKLSIIFLIFALIASVLCSA. The tract at residues 29-81 is disordered; it reads HSSSTTTTTSSSGGTSGTDSSINTGSSYSGSGSGSGSTGGSGSGSGSGTAKWK. Over residues 30 to 58 the composition is skewed to low complexity; it reads SSSTTTTTSSSGGTSGTDSSINTGSSYSG. Over residues 59-75 the composition is skewed to gly residues; it reads SGSGSGSTGGSGSGSGS.

It is found in the secreted. This is an uncharacterized protein from Dictyostelium discoideum (Social amoeba).